We begin with the raw amino-acid sequence, 119 residues long: Ribonuclease P protein component (119 aa).

It belongs to the RnpA family. Consists of a catalytic RNA component (M1 or rnpB) and a protein subunit.

It catalyses the reaction Endonucleolytic cleavage of RNA, removing 5'-extranucleotides from tRNA precursor.. RNaseP catalyzes the removal of the 5'-leader sequence from pre-tRNA to produce the mature 5'-terminus. It can also cleave other RNA substrates such as 4.5S RNA. The protein component plays an auxiliary but essential role in vivo by binding to the 5'-leader sequence and broadening the substrate specificity of the ribozyme. The polypeptide is Ribonuclease P protein component (Aromatoleum aromaticum (strain DSM 19018 / LMG 30748 / EbN1) (Azoarcus sp. (strain EbN1))).